A 172-amino-acid chain; its full sequence is Large ribosomal subunit protein uL10 (172 aa).

The protein belongs to the universal ribosomal protein uL10 family. In terms of assembly, part of the ribosomal stalk of the 50S ribosomal subunit. The N-terminus interacts with L11 and the large rRNA to form the base of the stalk. The C-terminus forms an elongated spine to which L12 dimers bind in a sequential fashion forming a multimeric L10(L12)X complex.

Forms part of the ribosomal stalk, playing a central role in the interaction of the ribosome with GTP-bound translation factors. This is Large ribosomal subunit protein uL10 from Francisella philomiragia subsp. philomiragia (strain ATCC 25017 / CCUG 19701 / FSC 153 / O#319-036).